We begin with the raw amino-acid sequence, 349 residues long: MSKIRVLSVDDSALMRQIMTEIINSHSDMEMVATAPDPLVARDLIKKFNPDVLTLDVEMPRMDGLDFLEKLMRLRPMPVVMVSSLTGKGSEVTLRALELGAIDFVTKPQLGIREGMLAYSEMIAEKVRTAAKASLAAHKPLSAPTTLKAGPLLSSEKLIAIGASTGGTEAIRHVLQPLPLSSPALLITQHMPPGFTRSFADRLNKLCQIGVKEAEDGERVLPGHAYIAPGDRHMELARSGANYQIKIHDGPAVNRHRPSVDVLFHSVAKQAGRNAVGVILTGMGNDGAAGMLAMRQAGAWTLAQNEASCVVFGMPREAINMGGVCEVVDLNQVSQQMLAKISAGQAIRI.

In terms of domain architecture, Response regulatory spans 5 to 122 (RVLSVDDSAL…REGMLAYSEM (118 aa)). D56 bears the 4-aspartylphosphate mark. Residues 152–344 (LLSSEKLIAI…QQMLAKISAG (193 aa)) enclose the CheB-type methylesterase domain. Active-site residues include S164, H190, and D286.

This sequence belongs to the CheB family. In terms of processing, phosphorylated by CheA. Phosphorylation of the N-terminal regulatory domain activates the methylesterase activity.

The protein localises to the cytoplasm. It carries out the reaction [protein]-L-glutamate 5-O-methyl ester + H2O = L-glutamyl-[protein] + methanol + H(+). The catalysed reaction is L-glutaminyl-[protein] + H2O = L-glutamyl-[protein] + NH4(+). In terms of biological role, involved in chemotaxis. Part of a chemotaxis signal transduction system that modulates chemotaxis in response to various stimuli. Catalyzes the demethylation of specific methylglutamate residues introduced into the chemoreceptors (methyl-accepting chemotaxis proteins or MCP) by CheR. Also mediates the irreversible deamidation of specific glutamine residues to glutamic acid. This Escherichia coli O157:H7 protein is Protein-glutamate methylesterase/protein-glutamine glutaminase.